The primary structure comprises 1080 residues: Adenylate cyclase type 7 (1080 aa).

Over 1–33 (MPAKGRYFLNEGEEGPDQDALYEKYQLTSQHGP) the chain is Cytoplasmic. 6 consecutive transmembrane segments (helical) span residues 34–54 (LLLT…IIAF), 63–83 (QAIL…SVLM), 95–117 (ALAL…DAWT), 122–142 (AWEQ…LLPF), 147–167 (AVAV…SLMG), and 176–196 (VGLQ…TGAF). Over 197-594 (HKHQMQDASR…YRLAPIPRAR (398 aa)) the chain is Cytoplasmic. The 128-residue stretch at 279–406 (SILYADIVGF…HDVSLANRME (128 aa)) folds into the Guanylate cyclase 1 domain. Residues Asp-284, Ile-285, and Asp-328 each coordinate Mg(2+). Residues 284 to 289 (DIVGFT), 326 to 328 (LGD), and Arg-372 each bind ATP. Positions 454–474 (DPRSQQPPPPSQHLPRPKGDA) are disordered. Positions 477–482 (KMRASV) are mediates regulation of adenylate cyclase activity by C5 alpha-induced G- beta and gamma pathway. Positions 491–499 (WGAARPFAH) are mediates regulation of adenylate cyclase activity by sphingosine 1-phosphate-induced G alpha 13 pathway. The segment at 504–546 (ESVSSGETHVPNGRRPKSVPQRHRRTPDRSMSPKGRSEDDSYD) is disordered. The interval 506–584 (VSSGETHVPN…IFLEKGFERE (79 aa)) is modulates adenylate cyclase activity by modulating the binding of G(s)alpha to the high-affinity G(s)alpha binding site in 7C1a/7C2. Residues 515–529 (NGRRPKSVPQRHRRT) show a composition bias toward basic residues. 3 helical membrane-spanning segments follow: residues 595–615 (HDFA…VLLM), 620–640 (ALGV…GLCF), and 669–688 (LTLA…INLP). A glycan (N-linked (GlcNAc...) asparagine) is linked at Asn-701. Helical transmembrane passes span 718–737 (PLPY…SVFL) and 746–773 (VLLT…CGQG). N-linked (GlcNAc...) asparagine glycans are attached at residues Asn-776 and Asn-781. The helical transmembrane segment at 794–814 (DLKTMTNFYLVLFYITLLTLS) threads the bilayer. Residues 815–1080 (RQIDYYCRLD…TAKFQGLGLN (266 aa)) are Cytoplasmic-facing. The Guanylate cyclase 2 domain occupies 879–1023 (CVMFASVPDF…NTVNVASRME (145 aa)). Residues Lys-931, 1010-1012 (DIW), 1017-1021 (NVASR), and Lys-1057 contribute to the ATP site.

Belongs to the adenylyl cyclase class-4/guanylyl cyclase family. It depends on Mg(2+) as a cofactor. The cofactor is Mn(2+). In terms of processing, phosphorylated by PRKCD.

The protein resides in the membrane. It carries out the reaction ATP = 3',5'-cyclic AMP + diphosphate. Its activity is regulated as follows. Activated by the G protein alpha subunit. Activated by the G protein beta and gamma subunit complex. Activated by GNA13 and GNA12. Ethanol and phorbol 12,13-dibutanoate significantly potentiate adenylate cyclase activity generated in response to the activation of the prostanoid receptor by the agonist prostaglandin E1(1-) in a PKC-dependent manner. Inhibited by lithium. Functionally, catalyzes the formation of cAMP in response to activation of G protein-coupled receptors. Functions in signaling cascades activated namely by thrombin and sphingosine 1-phosphate and mediates regulation of cAMP synthesis through synergistic action of the stimulatory G alpha protein with GNA13. Also, during inflammation, mediates zymosan-induced increase intracellular cAMP, leading to protein kinase A pathway activation in order to modulate innate immune responses through heterotrimeric G proteins G(12/13). Functions in signaling cascades activated namely by dopamine and C5 alpha chain and mediates regulation of cAMP synthesis through synergistic action of the stimulatory G protein with G beta:gamma complex. Functions, through cAMP response regulation, to keep inflammation under control during bacterial infection by sensing the presence of serum factors, such as the bioactive lysophospholipid (LPA) that regulate LPS-induced TNF-alpha production. However, it is also required for the optimal functions of B and T cells during adaptive immune responses by regulating cAMP synthesis in both B and T cells. This Homo sapiens (Human) protein is Adenylate cyclase type 7.